The sequence spans 200 residues: Phospholipase A2 inhibitor CgMIP-I (200 aa).

Residues 1 to 19 form the signal peptide; the sequence is MKYLHTICLLFIFVARGNS. Disulfide bonds link cysteine 22–cysteine 46, cysteine 25–cysteine 32, cysteine 39–cysteine 67, cysteine 73–cysteine 94, cysteine 95–cysteine 100, cysteine 118–cysteine 143, and cysteine 136–cysteine 165. N-linked (GlcNAc...) asparagine glycosylation is present at asparagine 176.

This sequence belongs to the CNF-like-inhibitor family. As to quaternary structure, homomer of 110 kDa composed of 20-25-kDa subunits. Post-translationally, N-glycosylated. The glycosidic chain may contain superficial sialic acid residues. Expressed by the liver.

It is found in the secreted. In terms of biological role, inhibits the enzymatic activity of basic phospholipase A2. Specifically neutralizes PLA2, myotoxic, edema-forming, cytolytic, and anti-coagulant activities, as well as intracerebral lethal effect of the basic myotoxin I from the same venom (AC P0DQP6), crotoxin heterodimer and crotoxin subunit B alone. Does not block the enzymatic activity of crude acidic PLA2 fractions from the same venom. The polypeptide is Phospholipase A2 inhibitor CgMIP-I (Cerrophidion godmani (Porthidium godmani)).